The chain runs to 37 residues: MKVRPSVKPICEKCKVIKRHGHVMVICENPKHKQKQG.

It belongs to the bacterial ribosomal protein bL36 family.

This Symbiobacterium thermophilum (strain DSM 24528 / JCM 14929 / IAM 14863 / T) protein is Large ribosomal subunit protein bL36.